We begin with the raw amino-acid sequence, 232 residues long: MGEAALAVVKLGGSLLFEDEGSLKEGYVRGFLRELREYLAESNGRVVVVVGGGRYARNYIQLGRRLGVNEGVLDYLGILVSRLNAATMYAAFYNSPPLIPETLLDVHKLLASGLRVVFMGGLQPGQSTTTTAALVAESLNGSLIIATDVEGIYTDDPKRNPAATLMERVSVEELRRMFQREQVAGEYRMIDVLSLNVIQRSKVKVFVLKGDPPGNIFRALRGERVAGTFIEA.

An ATP-binding site is contributed by 13–14 (GS). Gly52 contacts UMP. Gly53 and Arg57 together coordinate ATP. UMP contacts are provided by residues Asp74 and 122–128 (LQPGQST). The ATP site is built by Thr147, Tyr153, and Asp156.

It belongs to the UMP kinase family. As to quaternary structure, homohexamer.

Its subcellular location is the cytoplasm. It catalyses the reaction UMP + ATP = UDP + ADP. It functions in the pathway pyrimidine metabolism; CTP biosynthesis via de novo pathway; UDP from UMP (UMPK route): step 1/1. Inhibited by UTP. Its function is as follows. Catalyzes the reversible phosphorylation of UMP to UDP. The sequence is that of Uridylate kinase from Thermofilum pendens (strain DSM 2475 / Hrk 5).